A 368-amino-acid polypeptide reads, in one-letter code: Glutamate 5-kinase (368 aa).

Lysine 15 contacts ATP. 3 residues coordinate substrate: serine 55, aspartate 143, and asparagine 155. Residues 175–176 (SD) and 217–223 (SGGMVSK) each bind ATP. The region spanning 277 to 354 (EGRLTIDAGA…DAQEAALGYA (78 aa)) is the PUA domain.

Belongs to the glutamate 5-kinase family.

The protein resides in the cytoplasm. It carries out the reaction L-glutamate + ATP = L-glutamyl 5-phosphate + ADP. Its pathway is amino-acid biosynthesis; L-proline biosynthesis; L-glutamate 5-semialdehyde from L-glutamate: step 1/2. Catalyzes the transfer of a phosphate group to glutamate to form L-glutamate 5-phosphate. The chain is Glutamate 5-kinase from Sphingopyxis alaskensis (strain DSM 13593 / LMG 18877 / RB2256) (Sphingomonas alaskensis).